A 334-amino-acid polypeptide reads, in one-letter code: MNKSIVFSGAQPTGKLTIGNYIGSIRHWVEMQKHYQCIYCIVDLHSITVRNNLCSLHTRSLDTLALYLACGINPDISTIFIQSHVPEHSQLNWILNCYTYYGELNRMVQFKEKSSRYKNNINVGLFNYPILMASDILLYQTDFVPVGEDQRQHVELVRDIARRFNNIFGTVFKIPNVLISMYGSRIMSLLNPTRKMSKSDPDPNSYITLLDNVDCISKKIQGAVTDSDSPAAICFDPIKKPGISNLLAILSGISGQSILNLEESFQSKTYAQLKDVVIQELSCMLKDLQCRYISERSNEGKLNHILNVGSQKARMQAQITFKKVNELMGFYKES.

ATP is bound by residues 11–13 (QPT) and 19–20 (GN). The short motif at 12–20 (PTGKLTIGN) is the 'HIGH' region element. D135 is an L-tryptophan binding site. ATP contacts are provided by residues 147 to 149 (GED), I186, and 195 to 199 (KMSKS). The 'KMSKS' region motif lies at 195 to 199 (KMSKS).

It belongs to the class-I aminoacyl-tRNA synthetase family. As to quaternary structure, homodimer.

It is found in the cytoplasm. The catalysed reaction is tRNA(Trp) + L-tryptophan + ATP = L-tryptophyl-tRNA(Trp) + AMP + diphosphate + H(+). Catalyzes the attachment of tryptophan to tRNA(Trp). The chain is Tryptophan--tRNA ligase from Blochmanniella floridana.